The primary structure comprises 195 residues: Apoptosis-associated speck-like protein containing a CARD (195 aa).

One can recognise a Pyrin domain in the interval 1–91; that stretch reads MGCTRDAILD…AEQLQETMSK (91 aa). Residues lysine 55 and lysine 174 each participate in a glycyl lysine isopeptide (Lys-Gly) (interchain with G-Cter in ubiquitin) cross-link. The CARD domain occupies 107–195; the sequence is TAKPGLHFVD…PYLVDDLEQS (89 aa). Serine 195 is modified (phosphoserine).

In terms of assembly, self-associates; enforced oligomerization induces apoptosis, NF-kappa-B regulation and interleukin-1 beta secretion. Homooligomers can form disk-like particles of approximately 12 nm diameter and approximately 1 nm height. Component of several inflammasomes containing one pattern recognition receptor/sensor, such as NLRP1, NLRP2, NLRP3, NLRP6, NLRC4, AIM2, MEFV or NOD2, and probably NLRC4 or NLRP12. Major component of the ASC pyroptosome, a 1-2 um supramolecular assembly (one per macrophage cell) which consists of oligomerized PYCARD dimers and CASP1. Interacts with CASP1 (precursor form); the interaction induces activation of CASP1 leading to the processing of interleukin-1 beta; PYCARD competes with RIPK2 for binding to CASP1. Interacts with NLRP3; the interaction requires the homooligomerization of NLRP3. Interacts with NLRP2, NLRC4, MEFV, CARD16, AIM2, NOD2, RIGI, RIPK2, PYDC1, PYDC2, NLRP10, CASP8, CHUK, IKBKB and BAX. Component of the AIM2 PANoptosome complex, a multiprotein complex that drives inflammatory cell death (PANoptosis). Post-translationally, phosphorylated. 'Lys-63'-linked polyubiquitination by TRAF3 is critical for speck formation and inflammasome activation. 'Lys-63'-linked deubiquitinated by USP50; a crucial step for NLRP3-mediated inflammasome activation. 'Lys-63'-linked polyubiquitination by PELI1 is also critical for speck formation and inflammasome activation. Deubiquitinated by USP3 that cleaves 'Lys-48'-linked ubiquitin chains and strengthens its stability by blocking proteasomal degradation.

The protein localises to the cytoplasm. Its subcellular location is the inflammasome. It localises to the endoplasmic reticulum. It is found in the mitochondrion. The protein resides in the nucleus. Functions as a key mediator in apoptosis and inflammation. Promotes caspase-mediated apoptosis involving predominantly caspase-8 and also caspase-9 in a probable cell type-specific manner. Involved in activation of the mitochondrial apoptotic pathway, promotes caspase-8-dependent proteolytic maturation of BID independently of FADD in certain cell types and also mediates mitochondrial translocation of BAX and activates BAX-dependent apoptosis coupled to activation of caspase-9, -2 and -3. Involved in innate immune response by acting as an integral adapter in the assembly of various inflammasomes (NLRP2, NLRP3, NLRP6 and AIM2) which recruit and activate caspase-1 leading to processing and secretion of pro-inflammatory cytokines. Caspase-1-dependent inflammation leads to macrophage pyroptosis, a form of cell death. The function as activating adapter in different types of inflammasomes is mediated by the pyrin and CARD domains and their homotypic interactions. Clustered PYCARD nucleates the formation of caspase-1 filaments through the interaction of their respective CARD domains, acting as a platform for of caspase-1 polymerization. In the NLRC4 inflammasomes seems not be required but facilitates the processing of procaspase-1. In cooperation with NOD2 involved in an inflammasome activated by bacterial muramyl dipeptide leading to caspase-1 activation. May be involved in RIGI-triggered pro-inflammatory responses and inflammasome activation. In collaboration with AIM2 which detects cytosolic double-stranded DNA may also be involved in a caspase-1-independent cell death that involves caspase-8. In adaptive immunity may be involved in maturation of dendritic cells to stimulate T-cell immunity and in cytoskeletal rearrangements coupled to chemotaxis and antigen uptake may be involved in post-transcriptional regulation of the guanine nucleotide exchange factor DOCK2; the latter function is proposed to involve the nuclear form. Also involved in transcriptional activation of cytokines and chemokines independent of the inflammasome; this function may involve AP-1, NF-kappa-B, MAPK and caspase-8 signaling pathways. For regulation of NF-kappa-B activating and inhibiting functions have been reported. Modulates NF-kappa-B induction at the level of the IKK complex by inhibiting kinase activity of CHUK and IKBK. Proposed to compete with RIPK2 for association with CASP1 thereby down-regulating CASP1-mediated RIPK2-dependent NF-kappa-B activation and activating interleukin-1 beta processing. Modulates host resistance to DNA virus infection, probably by inducing the cleavage of and inactivating CGAS in presence of cytoplasmic double-stranded DNA. In Bos taurus (Bovine), this protein is Apoptosis-associated speck-like protein containing a CARD (PYCARD).